The primary structure comprises 111 residues: Large ribosomal subunit protein uL22 (111 aa).

The protein belongs to the universal ribosomal protein uL22 family. Part of the 50S ribosomal subunit.

In terms of biological role, this protein binds specifically to 23S rRNA; its binding is stimulated by other ribosomal proteins, e.g. L4, L17, and L20. It is important during the early stages of 50S assembly. It makes multiple contacts with different domains of the 23S rRNA in the assembled 50S subunit and ribosome. Its function is as follows. The globular domain of the protein is located near the polypeptide exit tunnel on the outside of the subunit, while an extended beta-hairpin is found that lines the wall of the exit tunnel in the center of the 70S ribosome. The polypeptide is Large ribosomal subunit protein uL22 (Chlamydia trachomatis serovar L2 (strain ATCC VR-902B / DSM 19102 / 434/Bu)).